A 1086-amino-acid chain; its full sequence is Receptor-type guanylate cyclase gcy-6 (1086 aa).

An N-terminal signal peptide occupies residues 1 to 21; sequence MIGVYLRSVIFPLLFVIQTIC. The Extracellular segment spans residues 22–487; the sequence is QPPGNVFHLG…PANVFFQYIG (466 aa). N-linked (GlcNAc...) asparagine glycosylation is found at asparagine 325, asparagine 343, asparagine 387, and asparagine 427. Residues 488–508 form a helical membrane-spanning segment; it reads WFIAAIIIIFFTIMGAILAFI. Residues 509–1086 lie on the Cytoplasmic side of the membrane; sequence YLCHAKQQEV…APKILKKKQD (578 aa). A Protein kinase domain is found at 560–836; the sequence is SSTLSEVGET…NDNLMDHVFN (277 aa). Residues 566–574 and lysine 589 each bind ATP; that span reads VGETRNYLF. In terms of domain architecture, Guanylate cyclase spans 894–1024; that stretch reads TLFFSDVVSF…DAVNTASRME (131 aa).

The protein belongs to the adenylyl cyclase class-4/guanylyl cyclase family. As to expression, expressed in both ASEL and ASER neurons throughout late embryonic and early larval stages. In adults, expressed asymmetrically in ASE left (ASEL) sensory neuron.

The protein localises to the cell membrane. The catalysed reaction is GTP = 3',5'-cyclic GMP + diphosphate. Functionally, guanylate cyclase involved in the production of the second messenger cGMP. Regulates chemotaxis responses toward the salt ion Mg(2+) and to a lesser extent toward Cl(1-) in ASE left (ASEL) sensory neuron. This chain is Receptor-type guanylate cyclase gcy-6, found in Caenorhabditis elegans.